The primary structure comprises 903 residues: Dual serine/threonine and tyrosine protein kinase (903 aa).

Positions 382 to 414 (ANRKQEEMKEMIVETLESMKEQLLEDAANLEFT) form a coiled coil. In terms of domain architecture, Protein kinase spans 627–881 (PKLGRELGRG…PLLGIVQPSL (255 aa)). ATP contacts are provided by residues 633 to 641 (LGRGQYGVV) and K656. Residue D752 is the Proton acceptor of the active site.

Belongs to the protein kinase superfamily. Ser/Thr protein kinase family.

The protein resides in the cytoplasm. Its subcellular location is the cell membrane. The protein localises to the apical cell membrane. It localises to the basolateral cell membrane. It is found in the cell junction. It carries out the reaction L-seryl-[protein] + ATP = O-phospho-L-seryl-[protein] + ADP + H(+). The catalysed reaction is L-threonyl-[protein] + ATP = O-phospho-L-threonyl-[protein] + ADP + H(+). It catalyses the reaction L-tyrosyl-[protein] + ATP = O-phospho-L-tyrosyl-[protein] + ADP + H(+). May act as a positive regulator of ERK phosphorylation downstream of fibroblast growth factor-receptor activation. May induce both caspase-dependent apoptosis and caspase-independent cell death. May play a role in the embryonic development. The polypeptide is Dual serine/threonine and tyrosine protein kinase (Pimephales promelas (Fathead minnow)).